A 588-amino-acid chain; its full sequence is Protein disulfide-isomerase-like protein of the testis (588 aa).

The signal sequence occupies residues 1 to 20 (MELLWTPLLLVAACLSEVLG). N-linked (GlcNAc...) asparagine glycosylation is found at Asn-55, Asn-157, and Asn-337. The Thioredoxin domain occupies 385–448 (PVKKLVGKNF…IAKIDITAND (64 aa)). Basic and acidic residues-rich tracts occupy residues 531–542 (IEDTSKQDRPVK), 549–567 (SIRK…EREA), and 574–588 (EQPK…KEEL). Positions 531–588 (IEDTSKQDRPVKESPVLDSIRKPEEPERRKETAEREAAAAQPKEQPKPERKLEVKEEL) are disordered. The Prevents secretion from ER motif lies at 585–588 (KEEL).

It belongs to the protein disulfide isomerase family. In terms of assembly, homodimer. The homodimer is not disulfide-linked. Interacts with CLGN and ERO1A. In terms of processing, N-glycosylated. As to expression, testis-specific (at protein level).

It is found in the endoplasmic reticulum. Its function is as follows. Probable redox-inactive chaperone involved in spermatogenesis. This is Protein disulfide-isomerase-like protein of the testis (Pdilt) from Mus musculus (Mouse).